We begin with the raw amino-acid sequence, 662 residues long: uncharacterized protein (662 aa).

Disordered stretches follow at residues 1–94 (MSQR…NENN), 107–237 (DHNN…VKYH), 288–328 (ETTS…TPSA), 406–440 (QSSFLNKPTNNTETPTTTTTTTTTTTTTPSQPIQM), and 506–580 (QNSI…MVSP). Over residues 25–49 (TTTTTPTPTTTTTTTSSLSSSTSST) the composition is skewed to low complexity. Positions 77-87 (DNIKLDNEKTF) are enriched in basic and acidic residues. Positions 109–161 (NNNNNNNNNNNNNNNNNNNNNNNNNNNNNNNNNNNNNNNNNNNNNNNNNNNNN) are enriched in low complexity. Residues 162–176 (DTQKGTNKNENNCTD) show a composition bias toward polar residues. Low complexity predominate over residues 183–196 (STSTTSSSETGSST). A compositionally biased stretch (polar residues) spans 203–212 (KTPQSCLKKS). Positions 213–224 (NNNNNDNNNNNN) are enriched in low complexity. The segment covering 226–235 (KTPRSTKKVK) has biased composition (basic residues). Low complexity-rich tracts occupy residues 288–308 (ETTSVTSTTSTATTTTTTPIP), 413–434 (PTNNTETPTTTTTTTTTTTTTP), 515–526 (PTKSSSSTSIQQ), and 535–575 (NINN…NNNN).

This is an uncharacterized protein from Dictyostelium discoideum (Social amoeba).